A 146-amino-acid chain; its full sequence is Ribosome-binding factor A (146 aa).

The tract at residues 122–146 is disordered; the sequence is QQQFGSVDDVTENDIDEADDTEGKA. The span at 130-146 shows a compositional bias: acidic residues; that stretch reads DVTENDIDEADDTEGKA.

Belongs to the RbfA family. In terms of assembly, monomer. Binds 30S ribosomal subunits, but not 50S ribosomal subunits or 70S ribosomes.

The protein localises to the cytoplasm. One of several proteins that assist in the late maturation steps of the functional core of the 30S ribosomal subunit. Associates with free 30S ribosomal subunits (but not with 30S subunits that are part of 70S ribosomes or polysomes). Required for efficient processing of 16S rRNA. May interact with the 5'-terminal helix region of 16S rRNA. This is Ribosome-binding factor A from Shewanella sp. (strain MR-7).